The primary structure comprises 365 residues: Membrane-bound lytic murein transglycosylase C (365 aa).

An N-terminal signal peptide occupies residues 1 to 19 (MKKYTKYLPLLLIIPFLAA). The N-palmitoyl cysteine moiety is linked to residue C20. C20 carries the S-diacylglycerol cysteine lipid modification.

This sequence belongs to the transglycosylase Slt family.

It localises to the cell outer membrane. It carries out the reaction Exolytic cleavage of the (1-&gt;4)-beta-glycosidic linkage between N-acetylmuramic acid (MurNAc) and N-acetylglucosamine (GlcNAc) residues in peptidoglycan, from either the reducing or the non-reducing ends of the peptidoglycan chains, with concomitant formation of a 1,6-anhydrobond in the MurNAc residue.. Functionally, murein-degrading enzyme. May play a role in recycling of muropeptides during cell elongation and/or cell division. The protein is Membrane-bound lytic murein transglycosylase C of Actinobacillus pleuropneumoniae serotype 5b (strain L20).